We begin with the raw amino-acid sequence, 452 residues long: Isocitrate dehydrogenase [NADP], mitochondrial (452 aa).

The N-terminal 39 residues, 1–39, are a transit peptide targeting the mitochondrion; sequence MAGYLRVVRSLCRASGSRPAWAPAALTAPTSQEQPRRHY. K45, K48, K67, and K69 each carry N6-acetyllysine. N6-acetyllysine; alternate is present on residues K80 and K106. K80 and K106 each carry N6-succinyllysine; alternate. Residues 115 to 117 and R122 contribute to the NADP(+) site; that span reads TIT. T117 is a binding site for D-threo-isocitrate. D-threo-isocitrate contacts are provided by residues 134–140 and R149; that span reads SPNGTIR. K155 carries the post-translational modification N6-acetyllysine. The residue at position 166 (K166) is an N6-acetyllysine; alternate. An N6-succinyllysine; alternate modification is found at K166. A D-threo-isocitrate-binding site is contributed by R172. N6-acetyllysine; alternate occurs at positions 180 and 193. Residues K180 and K193 each carry the N6-succinyllysine; alternate modification. At K199 the chain carries N6-acetyllysine. K256 is subject to N6-acetyllysine; alternate. K256 carries the post-translational modification N6-succinyllysine; alternate. K263, K272, K275, and K280 each carry N6-acetyllysine. K282 bears the N6-acetyllysine; alternate mark. K282 is modified (N6-succinyllysine; alternate). A Mn(2+)-binding site is contributed by D291. K299 is an NADP(+) binding site. Position 314 (D314) interacts with Mn(2+). Residues 349–354 and N367 contribute to the NADP(+) site; that span reads GTVTRH. At K384 the chain carries N6-acetyllysine; alternate. The residue at position 384 (K384) is an N6-succinyllysine; alternate. N6-acetyllysine occurs at positions 400, 413, and 442.

This sequence belongs to the isocitrate and isopropylmalate dehydrogenases family. As to quaternary structure, homodimer. It depends on Mg(2+) as a cofactor. Mn(2+) serves as cofactor. Acetylation at Lys-413 dramatically reduces catalytic activity. Deacetylated by SIRT3.

The protein resides in the mitochondrion. It carries out the reaction D-threo-isocitrate + NADP(+) = 2-oxoglutarate + CO2 + NADPH. In terms of biological role, plays a role in intermediary metabolism and energy production. It may tightly associate or interact with the pyruvate dehydrogenase complex. The polypeptide is Isocitrate dehydrogenase [NADP], mitochondrial (IDH2) (Homo sapiens (Human)).